Here is a 371-residue protein sequence, read N- to C-terminus: Cytochrome b (371 aa).

4 consecutive transmembrane segments (helical) span residues 25–45, 69–90, 105–125, and 170–190; these read FGSM…FLAI, WTMQ…YIHI, WLSG…GYVL, and FFAL…AHIM. Heme b-binding residues include His75 and His89. Residues His174 and His188 each coordinate heme b. An a ubiquinone-binding site is contributed by His193. Transmembrane regions (helical) follow at residues 218 to 238, 280 to 300, 312 to 332, and 339 to 358; these read NKDM…LSFL, LGGT…PFTH, MTQT…WTAT, and FMFI…FMNP.

This sequence belongs to the cytochrome b family. In terms of assembly, the cytochrome bc1 complex contains 3 respiratory subunits (MT-CYB, CYC1 and UQCRFS1), 2 core proteins (UQCRC1 and UQCRC2) and probably 6 low-molecular weight proteins. It depends on heme b as a cofactor.

The protein resides in the mitochondrion inner membrane. In terms of biological role, component of the ubiquinol-cytochrome c reductase complex (complex III or cytochrome b-c1 complex) that is part of the mitochondrial respiratory chain. The b-c1 complex mediates electron transfer from ubiquinol to cytochrome c. Contributes to the generation of a proton gradient across the mitochondrial membrane that is then used for ATP synthesis. This chain is Cytochrome b (MT-CYB), found in Elapsoidea nigra (Usambara garter snake).